The following is a 434-amino-acid chain: ATP-sensitive inward rectifier potassium channel 14 (434 aa).

Residues 1–81 (MGLARALRRL…LSDLFTTCVD (81 aa)) lie on the Cytoplasmic side of the membrane. An S-nitrosocysteine modification is found at Cys-79. The chain crosses the membrane as a helical span at residues 82–108 (VRWRWMCLLFSCSFLASWLLFGLTFWL). Residues 109-131 (IASLHGDLAAPPPPAPCFSQVAS) lie on the Extracellular side of the membrane. An intramembrane region (helical; Pore-forming) is located at residues 132 to 148 (FLAAFLFALETQTSIGY). The Selectivity filter motif lies at 145-150 (SIGYGV). Topologically, residues 149-157 (GVRSVTEEC) are extracellular. The helical transmembrane segment at 158-185 (PAAVAAVVLQCIAGCVLDAFVVGAVMAK) threads the bilayer. Topologically, residues 186-434 (MAKPKKRNET…TPTLALTLPP (249 aa)) are cytoplasmic. The interval 398–434 (QEEDEEEDTKEGTSAETPDRAASPQALTPTLALTLPP) is disordered. Residues 407–416 (KEGTSAETPD) are compositionally biased toward basic and acidic residues. Over residues 418–434 (AASPQALTPTLALTLPP) the composition is skewed to low complexity.

Belongs to the inward rectifier-type potassium channel (TC 1.A.2.1) family. KCNJ14 subfamily. As to expression, expressed predominantly in motoneurons of cranial nerve motor nuclei within the general somatic and special visceral motor cell column.

It is found in the membrane. It carries out the reaction K(+)(in) = K(+)(out). Its activity is regulated as follows. Channel activity is regulated by variations of cytosolic pH; channels are activated by alkaline and inhibited by acidic pH values. Inhibited by Ba(2+) and Cs(+) in a voltage-dependent manner; sensitivity to those inhibitors is lower than in other Kir channels. Inward rectifier potassium channels are characterized by a greater tendency to allow potassium to flow into the cell rather than out of it. Their voltage dependence is regulated by the concentration of extracellular potassium; as external potassium is raised, the voltage range of the channel opening shifts to more positive voltages. The chain is ATP-sensitive inward rectifier potassium channel 14 (Kcnj14) from Rattus norvegicus (Rat).